Consider the following 287-residue polypeptide: Cyclopropane mycolic acid synthase 1 (287 aa).

S-adenosyl-L-methionine-binding positions include 33–34 (YS), 68–76 (LLDVGCGWG), 94–99 (TLSKNQ), and 123–124 (WE). Cys-269 is a catalytic residue.

It belongs to the CFA/CMAS family. As to quaternary structure, homodimer.

It is found in the cytoplasm. The enzyme catalyses a 1-acyl-2-(9Z)-enoyl-sn-glycero-3-phospholipid + S-adenosyl-L-methionine = a 1-acyl-2-(9-cyclopronane)-acyl-sn-glycero-3-phospholipid + S-adenosyl-L-homocysteine + H(+). Its pathway is lipid metabolism; mycolic acid biosynthesis. Catalyzes the conversion of a double bond to a cyclopropane ring at the distal position of an alpha mycolic acid via the transfer of a methylene group from S-adenosyl-L-methionine. Cyclopropanated mycolic acids are key factors participating in cell envelope permeability, host immunomodulation and persistence. The polypeptide is Cyclopropane mycolic acid synthase 1 (cmaA1) (Mycobacterium tuberculosis (strain ATCC 25177 / H37Ra)).